Here is a 262-residue protein sequence, read N- to C-terminus: Hydroxyethylthiazole kinase (262 aa).

M50 contributes to the substrate binding site. Positions 125 and 171 each coordinate ATP. Substrate is bound at residue G198.

It belongs to the Thz kinase family. The cofactor is Mg(2+).

The enzyme catalyses 5-(2-hydroxyethyl)-4-methylthiazole + ATP = 4-methyl-5-(2-phosphooxyethyl)-thiazole + ADP + H(+). It participates in cofactor biosynthesis; thiamine diphosphate biosynthesis; 4-methyl-5-(2-phosphoethyl)-thiazole from 5-(2-hydroxyethyl)-4-methylthiazole: step 1/1. In terms of biological role, catalyzes the phosphorylation of the hydroxyl group of 4-methyl-5-beta-hydroxyethylthiazole (THZ). The polypeptide is Hydroxyethylthiazole kinase (Escherichia coli (strain 55989 / EAEC)).